The sequence spans 380 residues: Probable tRNA sulfurtransferase (380 aa).

In terms of domain architecture, THUMP spans 58-162 (EEVIERLKKV…MAFVYAGVIE (105 aa)). ATP-binding positions include 178-179 (LL), 203-204 (YF), Arg-260, Gly-282, and Gln-291.

It belongs to the ThiI family.

It is found in the cytoplasm. The catalysed reaction is [ThiI sulfur-carrier protein]-S-sulfanyl-L-cysteine + a uridine in tRNA + 2 reduced [2Fe-2S]-[ferredoxin] + ATP + H(+) = [ThiI sulfur-carrier protein]-L-cysteine + a 4-thiouridine in tRNA + 2 oxidized [2Fe-2S]-[ferredoxin] + AMP + diphosphate. It catalyses the reaction [ThiS sulfur-carrier protein]-C-terminal Gly-Gly-AMP + S-sulfanyl-L-cysteinyl-[cysteine desulfurase] + AH2 = [ThiS sulfur-carrier protein]-C-terminal-Gly-aminoethanethioate + L-cysteinyl-[cysteine desulfurase] + A + AMP + 2 H(+). It functions in the pathway cofactor biosynthesis; thiamine diphosphate biosynthesis. Its function is as follows. Catalyzes the ATP-dependent transfer of a sulfur to tRNA to produce 4-thiouridine in position 8 of tRNAs, which functions as a near-UV photosensor. Also catalyzes the transfer of sulfur to the sulfur carrier protein ThiS, forming ThiS-thiocarboxylate. This is a step in the synthesis of thiazole, in the thiamine biosynthesis pathway. The sulfur is donated as persulfide by IscS. The chain is Probable tRNA sulfurtransferase from Thermoanaerobacter sp. (strain X514).